A 90-amino-acid chain; its full sequence is Large ribosomal subunit protein eL31 (90 aa).

Belongs to the eukaryotic ribosomal protein eL31 family.

This is Large ribosomal subunit protein eL31 from Thermococcus gammatolerans (strain DSM 15229 / JCM 11827 / EJ3).